The sequence spans 258 residues: Homeobox-leucine zipper protein ATHB-7 (258 aa).

Positions N29–Q88 form a DNA-binding region, homeobox. The leucine-zipper stretch occupies residues L89–L124. Residues S149 to V183 are disordered. Basic and acidic residues predominate over residues T151–V183.

It belongs to the HD-ZIP homeobox family. Class I subfamily. Interacts with TBP2 and TFIIB1. In terms of tissue distribution, widely expressed.

Its subcellular location is the nucleus. Its function is as follows. Probable transcription activator that may act as growth regulators in response to water deficit. This is Homeobox-leucine zipper protein ATHB-7 (ATHB-7) from Arabidopsis thaliana (Mouse-ear cress).